The sequence spans 394 residues: Acetate kinase (394 aa).

N7 lines the Mg(2+) pocket. K14 contributes to the ATP binding site. Position 88 (R88) interacts with substrate. D145 serves as the catalytic Proton donor/acceptor. Residues 205 to 209 (HLGNG), 279 to 281 (DFR), and 327 to 331 (GIGEN) contribute to the ATP site. Position 379 (E379) interacts with Mg(2+).

Belongs to the acetokinase family. Homodimer. It depends on Mg(2+) as a cofactor. Requires Mn(2+) as cofactor.

The protein localises to the cytoplasm. It catalyses the reaction acetate + ATP = acetyl phosphate + ADP. The protein operates within metabolic intermediate biosynthesis; acetyl-CoA biosynthesis; acetyl-CoA from acetate: step 1/2. Catalyzes the formation of acetyl phosphate from acetate and ATP. Can also catalyze the reverse reaction. This Campylobacter lari (strain RM2100 / D67 / ATCC BAA-1060) protein is Acetate kinase.